The primary structure comprises 187 residues: UPF0232 protein JTY_0004 (187 aa).

2 stretches are compositionally biased toward basic and acidic residues: residues 1–17 (MTGS…ERSM) and 24–45 (LVRR…DAGR). Disordered stretches follow at residues 1-75 (MTGS…DPQP) and 168-187 (PSWR…DTYG).

This sequence belongs to the UPF0232 family.

The sequence is that of UPF0232 protein JTY_0004 from Mycobacterium bovis (strain BCG / Tokyo 172 / ATCC 35737 / TMC 1019).